Consider the following 189-residue polypeptide: Dirigent protein 21 (189 aa).

An N-terminal signal peptide occupies residues 1–19 (MASLYLLLLLPLFLALILA). N-linked (GlcNAc...) asparagine glycosylation is found at asparagine 72 and asparagine 173.

The protein belongs to the plant dirigent protein family. Homodimer.

The protein resides in the secreted. In terms of biological role, dirigent proteins impart stereoselectivity on the phenoxy radical-coupling reaction, yielding optically active lignans from two molecules of coniferyl alcohol in the biosynthesis of lignans, flavonolignans, and alkaloids and thus plays a central role in plant secondary metabolism. The sequence is that of Dirigent protein 21 (DIR21) from Arabidopsis thaliana (Mouse-ear cress).